Consider the following 207-residue polypeptide: Holliday junction branch migration complex subunit RuvA (207 aa).

The domain I stretch occupies residues 1–63 (MIDSLHGEVL…DDGIDLYAFE (63 aa)). The segment at 64–142 (SDEARQMFAM…VFDSGDSASE (79 aa)) is domain II. The interval 143-154 (PQSGVGGNSEAE) is flexible linker. Residues 155–207 (VDSGVVGTVTQALVELGFPEKQAEKTATSAAAEGGSVSEILKRALRSMSSERN) form a domain III region.

This sequence belongs to the RuvA family. Homotetramer. Forms an RuvA(8)-RuvB(12)-Holliday junction (HJ) complex. HJ DNA is sandwiched between 2 RuvA tetramers; dsDNA enters through RuvA and exits via RuvB. An RuvB hexamer assembles on each DNA strand where it exits the tetramer. Each RuvB hexamer is contacted by two RuvA subunits (via domain III) on 2 adjacent RuvB subunits; this complex drives branch migration. In the full resolvosome a probable DNA-RuvA(4)-RuvB(12)-RuvC(2) complex forms which resolves the HJ.

Its subcellular location is the cytoplasm. Its function is as follows. The RuvA-RuvB-RuvC complex processes Holliday junction (HJ) DNA during genetic recombination and DNA repair, while the RuvA-RuvB complex plays an important role in the rescue of blocked DNA replication forks via replication fork reversal (RFR). RuvA specifically binds to HJ cruciform DNA, conferring on it an open structure. The RuvB hexamer acts as an ATP-dependent pump, pulling dsDNA into and through the RuvAB complex. HJ branch migration allows RuvC to scan DNA until it finds its consensus sequence, where it cleaves and resolves the cruciform DNA. In Corynebacterium kroppenstedtii (strain DSM 44385 / JCM 11950 / CIP 105744 / CCUG 35717), this protein is Holliday junction branch migration complex subunit RuvA.